A 125-amino-acid polypeptide reads, in one-letter code: Large ribosomal subunit protein bL12 (125 aa).

The protein belongs to the bacterial ribosomal protein bL12 family. Homodimer. Part of the ribosomal stalk of the 50S ribosomal subunit. Forms a multimeric L10(L12)X complex, where L10 forms an elongated spine to which 2 to 4 L12 dimers bind in a sequential fashion. Binds GTP-bound translation factors.

Functionally, forms part of the ribosomal stalk which helps the ribosome interact with GTP-bound translation factors. Is thus essential for accurate translation. This is Large ribosomal subunit protein bL12 from Rickettsia conorii (strain ATCC VR-613 / Malish 7).